Reading from the N-terminus, the 209-residue chain is Kynurenine formamidase (209 aa).

Tryptophan 19 lines the substrate pocket. Histidine 49, histidine 53, and aspartate 55 together coordinate Zn(2+). The active-site Proton donor/acceptor is the histidine 59. Histidine 160 and glutamate 172 together coordinate Zn(2+).

It belongs to the Cyclase 1 superfamily. KynB family. As to quaternary structure, homodimer. Zn(2+) serves as cofactor.

The catalysed reaction is N-formyl-L-kynurenine + H2O = L-kynurenine + formate + H(+). Its pathway is amino-acid degradation; L-tryptophan degradation via kynurenine pathway; L-kynurenine from L-tryptophan: step 2/2. Its function is as follows. Catalyzes the hydrolysis of N-formyl-L-kynurenine to L-kynurenine, the second step in the kynurenine pathway of tryptophan degradation. In Geobacillus thermodenitrificans (strain NG80-2), this protein is Kynurenine formamidase.